The primary structure comprises 594 residues: Alpha-1,4-glucan:maltose-1-phosphate maltosyltransferase (594 aa).

A disordered region spans residues 244–270 (NRKGRNNSLTPGPDDPGSPYAIGSEEG). Alpha-maltose 1-phosphate is bound by residues Lys-246, Gln-306, and Asp-341. Asp-377 acts as the Nucleophile in catalysis. Asn-378 lines the alpha-maltose 1-phosphate pocket. Glu-406 acts as the Proton donor in catalysis. Residue 517-518 (KY) participates in alpha-maltose 1-phosphate binding.

The protein belongs to the glycosyl hydrolase 13 family. GlgE subfamily. Homodimer.

The enzyme catalyses alpha-maltose 1-phosphate + [(1-&gt;4)-alpha-D-glucosyl](n) = [(1-&gt;4)-alpha-D-glucosyl](n+2) + phosphate. Maltosyltransferase that uses maltose 1-phosphate (M1P) as the sugar donor to elongate linear or branched alpha-(1-&gt;4)-glucans. Is involved in a branched alpha-glucan biosynthetic pathway from trehalose, together with TreS, Mak and GlgB. This chain is Alpha-1,4-glucan:maltose-1-phosphate maltosyltransferase, found in Cereibacter sphaeroides (Rhodobacter sphaeroides).